Consider the following 601-residue polypeptide: Vesicular glutamate transporter 3 (601 aa).

At 1-89 (MPFKAFDTFK…CSCCGIPKRY (89 aa)) the chain is on the cytoplasmic side. Residues 90–110 (IIAVMSGLGFCISFGIRCNLG) traverse the membrane as a helical segment. Residues 111–143 (VAIVEMVNNSTVYVDGKPEIQTAQFNWDPETVG) lie on the Vesicular side of the membrane. Asn119 carries N-linked (GlcNAc...) asparagine glycosylation. Residues 144–164 (LIHGSFFWGYIVTQIPGGFIS) traverse the membrane as a helical segment. Residues 165–166 (NK) lie on the Cytoplasmic side of the membrane. A helical membrane pass occupies residues 167–187 (FAASRVFGAAIFLTSTLNMFI). Over 188–195 (PSAARVHY) the chain is Vesicular. A helical transmembrane segment spans residues 196–216 (GCVMGVRILQGLVEGVTYPAC). The Cytoplasmic portion of the chain corresponds to 217–234 (HGMWSKWAPPLERSRLAT). The chain crosses the membrane as a helical span at residues 235–255 (TSFCGSYAGAVVAMPLAGVLV). At 256–262 (QYIGWAS) the chain is on the vesicular side. Residues 263–283 (VFYIYGMFGIIWYMFWLLQAY) traverse the membrane as a helical segment. Residues 284–327 (ECPAAHPTISNAERTYIETSIGEGANLASLSKFNTPWRRFFTSL) are Cytoplasmic-facing. Residues 328–348 (PVYAIIVANFCRSWTFYLLLI) form a helical membrane-spanning segment. Residues 349–366 (SQPAYFEEVFGFAISKVG) are Vesicular-facing. Residues 367–387 (LLSAVPHMVMTIVVPIGGQLA) form a helical membrane-spanning segment. The Cytoplasmic portion of the chain corresponds to 388–403 (DYLRSRKILTTTAVRK). Residues 404-424 (IMNCGGFGMEATLLLVVGFSH) form a helical membrane-spanning segment. The Vesicular portion of the chain corresponds to 425–426 (TK). Residues 427–447 (GVAISFLVLAVGFSGFAISGF) form a helical membrane-spanning segment. The Cytoplasmic segment spans residues 448 to 460 (NVNHLDIAPRYAS). Residues 461-481 (ILMGISNGVGTLSGMVCPLIV) traverse the membrane as a helical segment. Over 482 to 494 (GAMTKHKTREEWQ) the chain is Vesicular. The helical transmembrane segment at 495–515 (NVFLIAALVHYSGVIFYGVFA) threads the bilayer. At 516 to 598 (SGEKQDWADP…LSYQAEGDFS (83 aa)) the chain is on the cytoplasmic side. The interval 576–601 (RQQRESAFDGEEPLSYQAEGDFSETS) is disordered.

Belongs to the major facilitator superfamily. Sodium/anion cotransporter family. VGLUT subfamily. As to expression, expressed in restricted areas of the brain. Highest expression is found in the neurons of the basal forebrain, the hippocampal formation, and the majority of the neurons of the mesencephalic raphe nuclei. Expressed in inner hair cells of the ear.

It localises to the cytoplasmic vesicle. The protein localises to the secretory vesicle. The protein resides in the synaptic vesicle membrane. It is found in the cell membrane. Its subcellular location is the synapse. It localises to the synaptosome. The enzyme catalyses L-glutamate(out) = L-glutamate(in). It carries out the reaction 3 Na(+)(out) + phosphate(out) = 3 Na(+)(in) + phosphate(in). It catalyses the reaction chloride(in) = chloride(out). With respect to regulation, the L-glutamate uniporter activity exhibits a biphasic dependence on chloride concentration. Chloride channel activity is allosterically activated by lumenal H(+) and Cl(-) leading to synaptic vesicles acidification. The L-glutamate transport activity is allosterically activated by lumenal H(+) and Cl(-), preventing non-vesicular L-glutamate release. Its function is as follows. Multifunctional transporter that transports L-glutamate as well as multiple ions such as chloride, sodium and phosphate. At the synaptic vesicle membrane, mainly functions as an uniporter that mediates the uptake of L-glutamate into synaptic vesicles at presynaptic nerve terminals of excitatory neural cells. The L-glutamate uniporter activity is electrogenic and is driven by the proton electrochemical gradient, mainly by the electrical gradient established by the vacuolar H(+)-ATPase across the synaptic vesicle membrane. In addition, functions as a chloride channel that allows a chloride permeation through the synaptic vesicle membrane that affects the proton electrochemical gradient and promotes synaptic vesicles acidification. At the plasma membrane, following exocytosis, functions as a symporter of Na(+) and phosphate from the extracellular space to the cytoplasm allowing synaptic phosphate homeostasis regulation. The symporter activity is electrogenic. Moreover, operates synergistically with SLC18A3/VACHT under a constant H(+) gradient, thereby allowing striatal vesicular acetylcholine uptake. This is Vesicular glutamate transporter 3 from Mus musculus (Mouse).